Consider the following 352-residue polypeptide: Heat-inducible transcription repressor HrcA (352 aa).

It belongs to the HrcA family.

Functionally, negative regulator of class I heat shock genes (grpE-dnaK-dnaJ and groELS operons). Prevents heat-shock induction of these operons. The sequence is that of Heat-inducible transcription repressor HrcA from Thermosynechococcus vestitus (strain NIES-2133 / IAM M-273 / BP-1).